The following is a 394-amino-acid chain: Formate-dependent phosphoribosylglycinamide formyltransferase (394 aa).

N(1)-(5-phospho-beta-D-ribosyl)glycinamide is bound by residues E21 to L22 and E81. Residues R113, K154, S159 to Q164, E194 to I197, and E202 contribute to the ATP site. In terms of domain architecture, ATP-grasp spans R118–L307. E266 and E278 together coordinate Mg(2+). N(1)-(5-phospho-beta-D-ribosyl)glycinamide is bound by residues D285, K355, and R362 to R363.

It belongs to the PurK/PurT family. Homodimer.

It catalyses the reaction N(1)-(5-phospho-beta-D-ribosyl)glycinamide + formate + ATP = N(2)-formyl-N(1)-(5-phospho-beta-D-ribosyl)glycinamide + ADP + phosphate + H(+). Its pathway is purine metabolism; IMP biosynthesis via de novo pathway; N(2)-formyl-N(1)-(5-phospho-D-ribosyl)glycinamide from N(1)-(5-phospho-D-ribosyl)glycinamide (formate route): step 1/1. Functionally, involved in the de novo purine biosynthesis. Catalyzes the transfer of formate to 5-phospho-ribosyl-glycinamide (GAR), producing 5-phospho-ribosyl-N-formylglycinamide (FGAR). Formate is provided by PurU via hydrolysis of 10-formyl-tetrahydrofolate. The chain is Formate-dependent phosphoribosylglycinamide formyltransferase from Pelobacter propionicus (strain DSM 2379 / NBRC 103807 / OttBd1).